Reading from the N-terminus, the 420-residue chain is Ammonium transporter Amt2 (420 aa).

The next 11 membrane-spanning stretches (helical) occupy residues 34 to 54 (VFFL…FAML), 71 to 91 (NMVD…ILCS), 120 to 140 (SWFF…GGVA), 149 to 169 (VLIS…LGPW), 180 to 200 (AGSL…IAAL), 220 to 240 (IPMA…FNVG), 250 to 270 (GLVC…ALIA), 273 to 293 (NDVL…CSGT), 295 to 315 (VVSP…VPIV), 339 to 359 (VIGA…AGGV), and 365 to 385 (IIGA…LAKI).

Belongs to the ammonia transporter channel (TC 1.A.11.2) family. In terms of assembly, homotrimer. Interacts and forms a complex with GlnK2.

The protein resides in the cell membrane. Involved in the uptake of ammonium/ammonia (NH(4)(+)/NH(3)). Transport is electrogenic. The sequence is that of Ammonium transporter Amt2 from Methanocaldococcus jannaschii (strain ATCC 43067 / DSM 2661 / JAL-1 / JCM 10045 / NBRC 100440) (Methanococcus jannaschii).